The primary structure comprises 189 residues: UPF0232 protein MLBr00004 (189 aa).

The segment at 59–78 is disordered; that stretch reads TDRRRNWSGPGPDVRDPQPL.

Belongs to the UPF0232 family.

This chain is UPF0232 protein MLBr00004, found in Mycobacterium leprae (strain Br4923).